A 616-amino-acid polypeptide reads, in one-letter code: Homeodomain-interacting protein kinase 4 (616 aa).

The 337-residue stretch at 11–347 (YDIIEVLGKG…PSAALRHPFV (337 aa)) folds into the Protein kinase domain. ATP-binding positions include 17-25 (LGKGTFGEV) and Lys-40. Residue Asp-136 is the Proton acceptor of the active site. The segment at 487–616 (HKARKAPAGS…SFLQHVGGHH (130 aa)) is disordered. The span at 497–512 (KSDSNFSNLIRLSQAS) shows a compositional bias: polar residues. The residue at position 512 (Ser-512) is a Phosphoserine. The span at 542 to 560 (REGDGPGIKDRPMDAERPG) shows a compositional bias: basic and acidic residues.

It belongs to the protein kinase superfamily. CMGC Ser/Thr protein kinase family. HIPK subfamily. In terms of processing, autophosphorylated. In terms of tissue distribution, expressed at moderate levels in lung and white adipose tissues and weakly in brain and liver.

It is found in the cytoplasm. It catalyses the reaction L-seryl-[protein] + ATP = O-phospho-L-seryl-[protein] + ADP + H(+). The catalysed reaction is L-threonyl-[protein] + ATP = O-phospho-L-threonyl-[protein] + ADP + H(+). Its function is as follows. Protein kinase that phosphorylates murine TP53 at Ser-9, and thus induces TP53 repression of BIRC5 promoter. May act as a corepressor of transcription factors (Potential). The protein is Homeodomain-interacting protein kinase 4 (Hipk4) of Mus musculus (Mouse).